Here is a 382-residue protein sequence, read N- to C-terminus: SPRY domain-containing protein C285.10c (382 aa).

A helical transmembrane segment spans residues 21-41; it reads LAILFIFIALAAVIVLLICLL. Residues 79-284 enclose the B30.2/SPRY domain; that stretch reads GFSLLDDMGK…LHVNLGQAGY (206 aa). Residues 304–382 are disordered; that stretch reads APPPSYSTSQ…MHSMPATDEV (79 aa). 2 stretches are compositionally biased toward polar residues: residues 309 to 334 and 361 to 372; these read YSTS…QGDT and FSPSSSNNQAYQ.

The protein localises to the cytoplasm. It is found in the membrane. The chain is SPRY domain-containing protein C285.10c from Schizosaccharomyces pombe (strain 972 / ATCC 24843) (Fission yeast).